Consider the following 840-residue polypeptide: V-type proton ATPase subunit a, vacuolar isoform (840 aa).

Position 2 is an N-acetylalanine (Ala-2). At 2–404 the chain is on the cytoplasmic side; sequence AEKEEAIFRS…DCYGIAQYRE (403 aa). Residues 117-145 are a coiled coil; that stretch reads LEERLIQMEDATDQIEVQKNDLEQYRFIL. The chain crosses the membrane as a helical span at residues 405–423; it reads INAGLPTIVTFPFMFAIMF. Over 424–425 the chain is Vacuolar; the sequence is GD. The chain crosses the membrane as a helical span at residues 426 to 442; that stretch reads MGHGFLMTLAALSLVLN. At 443–456 the chain is on the cytoplasmic side; it reads EKKINKMKRGEIFD. A helical transmembrane segment spans residues 457–486; sequence MAFTGRYIILLMGVFSMYTGFLYNDIFSKT. Residues 487–534 are Vacuolar-facing; it reads MTIFKSGWKWPDHWKKGESITATSVGTYPIGLDWAWHGTENALLFSNS. The helical transmembrane segment at 535–554 threads the bilayer; it reads YKMKLSILMGFIHMTYSYFF. Over 555–572 the chain is Cytoplasmic; it reads SLANHLYFNSMIDIIGNF. Residues 573 to 593 traverse the membrane as a helical segment; the sequence is IPGLLFMQGIFGYLSVCIVYK. Residues 594–636 lie on the Vacuolar side of the membrane; the sequence is WAVDWVKDGKPAPGLLNMLINMFLSPGTIDDELYPHQAKVQVF. A helical membrane pass occupies residues 637-656; the sequence is LLLMALVCIPWLLLVKPLHF. The Cytoplasmic segment spans residues 657 to 719; that stretch reads KFTHKKKSHE…DIMIHQVIHT (63 aa). A helical membrane pass occupies residues 720–744; it reads IEFCLNCVSHTASYLRLWALSLAHA. The Vacuolar segment spans residues 745 to 765; the sequence is QLSSVLWTMTIQIAFGFRGFV. The helical transmembrane segment at 766–804 threads the bilayer; the sequence is GVFMTVALFAMWFALTCAVLVLMEGTSAMLHSLRLHWVE. The Cytoplasmic segment spans residues 805 to 840; the sequence is SMSKFFVGEGLPYEPFAFEYKDMEVAVASASSSASS.

Belongs to the V-ATPase 116 kDa subunit family. In terms of assembly, V-ATPase is a heteromultimeric enzyme composed of a peripheral catalytic V1 complex (components A to H) attached to an integral membrane V0 proton pore complex (components: a, c, c', c'', d, e, f and VOA1). In terms of processing, glycosylated.

It localises to the vacuole membrane. Subunit of the V0 complex of vacuolar(H+)-ATPase (V-ATPase), a multisubunit enzyme composed of a peripheral complex (V1) that hydrolyzes ATP and a membrane integral complex (V0) that translocates protons. V-ATPase is responsible for acidifying and maintaining the pH of intracellular compartments. Is present only in vacuolar V-ATPase complexes; enzymes containing this subunit have a 4-fold higher ratio of proton transport to ATP hydrolysis than complexes containing the Golgi/endosomal isoform and undergo reversible dissociation of V1 and V0 in response to glucose depletion. The sequence is that of V-type proton ATPase subunit a, vacuolar isoform from Saccharomyces cerevisiae (strain ATCC 204508 / S288c) (Baker's yeast).